The primary structure comprises 100 residues: NAD(P)H-quinone oxidoreductase subunit 4L, chloroplastic (100 aa).

The next 3 helical transmembrane spans lie at 1 to 21 (MLEH…YGLI), 29 to 49 (ALMC…TFSN), and 63 to 83 (IFVT…ALAI).

It belongs to the complex I subunit 4L family. In terms of assembly, NDH is composed of at least 16 different subunits, 5 of which are encoded in the nucleus.

The protein localises to the plastid. The protein resides in the chloroplast thylakoid membrane. The catalysed reaction is a plastoquinone + NADH + (n+1) H(+)(in) = a plastoquinol + NAD(+) + n H(+)(out). It catalyses the reaction a plastoquinone + NADPH + (n+1) H(+)(in) = a plastoquinol + NADP(+) + n H(+)(out). Its function is as follows. NDH shuttles electrons from NAD(P)H:plastoquinone, via FMN and iron-sulfur (Fe-S) centers, to quinones in the photosynthetic chain and possibly in a chloroplast respiratory chain. The immediate electron acceptor for the enzyme in this species is believed to be plastoquinone. Couples the redox reaction to proton translocation, and thus conserves the redox energy in a proton gradient. The sequence is that of NAD(P)H-quinone oxidoreductase subunit 4L, chloroplastic from Cycas taitungensis (Prince sago).